We begin with the raw amino-acid sequence, 168 residues long: Disulfide bond formation protein B 1 (168 aa).

Residues 1 to 14 (MNEQTSRLNRERRF) lie on the Cytoplasmic side of the membrane. The helical transmembrane segment at 15–31 (LVLLGLICLSLIGGALY) threads the bilayer. Residues 32-49 (MQVVLGEAPCPLCILQRY) are Periplasmic-facing. Cysteine 41 and cysteine 44 are oxidised to a cystine. The helical transmembrane segment at 50 to 65 (ALLFIAVFAFIAAAMP) threads the bilayer. Over 66–72 (GRRSLTF) the chain is Cytoplasmic. A helical membrane pass occupies residues 73-89 (FEALVVLSAIGGIVAAG). The Periplasmic segment spans residues 90 to 144 (NHVYILANPMVSCGIDTLQPIVDDLPLAKLWPLAFQVDGFCSTPYPPILGLSLAQ). A disulfide bridge links cysteine 102 with cysteine 130. The helical transmembrane segment at 145-163 (WALVAFVLTAVLVPLGIYR) threads the bilayer. Over 164–168 (NRRQA) the chain is Cytoplasmic.

Belongs to the DsbB family.

The protein localises to the cell inner membrane. Required for disulfide bond formation in some periplasmic proteins. Acts by oxidizing the DsbA protein. The polypeptide is Disulfide bond formation protein B 1 (dsbB1) (Pseudomonas putida (strain ATCC 47054 / DSM 6125 / CFBP 8728 / NCIMB 11950 / KT2440)).